Reading from the N-terminus, the 463-residue chain is tRNA-2-methylthio-N(6)-dimethylallyladenosine synthase (463 aa).

An MTTase N-terminal domain is found at 19–135 (GSYWITTFGC…LESLLNQVDS (117 aa)). [4Fe-4S] cluster-binding residues include C28, C64, C98, C170, C174, and C177. The 238-residue stretch at 156-393 (RDSSICGWVN…NSLVENIAKE (238 aa)) folds into the Radical SAM core domain. The TRAM domain maps to 396–463 (QRYKNTSQEI…RPFSLTAKLL (68 aa)).

It belongs to the methylthiotransferase family. MiaB subfamily. Monomer. [4Fe-4S] cluster is required as a cofactor.

It localises to the cytoplasm. The enzyme catalyses N(6)-dimethylallyladenosine(37) in tRNA + (sulfur carrier)-SH + AH2 + 2 S-adenosyl-L-methionine = 2-methylsulfanyl-N(6)-dimethylallyladenosine(37) in tRNA + (sulfur carrier)-H + 5'-deoxyadenosine + L-methionine + A + S-adenosyl-L-homocysteine + 2 H(+). Functionally, catalyzes the methylthiolation of N6-(dimethylallyl)adenosine (i(6)A), leading to the formation of 2-methylthio-N6-(dimethylallyl)adenosine (ms(2)i(6)A) at position 37 in tRNAs that read codons beginning with uridine. The protein is tRNA-2-methylthio-N(6)-dimethylallyladenosine synthase of Prochlorococcus marinus (strain NATL2A).